The chain runs to 646 residues: Macrolide export ATP-binding/permease protein MacB (646 aa).

An ABC transporter domain is found at 7-245; it reads IRLEDICKTF…EATLQPHEEI (239 aa). 43 to 50 is a binding site for ATP; it reads GASGSGKS. 4 consecutive transmembrane segments (helical) span residues 274-294, 528-548, 572-592, and 609-629; these read VLTLLGIIIGVSSVVTMLAIG, VAAISLLVGGIGVMNIMLVSV, FIIEALSVSAIGGAIGVILGL, and FGPVLLAFACAFATGLIFGFL.

The protein belongs to the ABC transporter superfamily. Macrolide exporter (TC 3.A.1.122) family. Homodimer.

The protein resides in the cell inner membrane. Functionally, non-canonical ABC transporter that contains transmembrane domains (TMD), which form a pore in the inner membrane, and an ATP-binding domain (NBD), which is responsible for energy generation. Confers resistance against macrolides. This chain is Macrolide export ATP-binding/permease protein MacB, found in Brucella abortus (strain 2308).